The following is a 194-amino-acid chain: Rho-related protein racC (194 aa).

13 residues coordinate GTP: alanine 17, glycine 19, lysine 20, threonine 21, cysteine 22, glutamate 34, tyrosine 36, threonine 39, glycine 64, lysine 120, aspartate 122, alanine 163, and lysine 164. Threonine 21 contributes to the Mg(2+) binding site. Short sequence motifs (switch) lie at residues 30–41 and 61–79; these read RKFPEDYIPTVF and DTAG…YSSA. Threonine 39 contacts Mg(2+). At cysteine 191 the chain carries Cysteine methyl ester. The S-geranylgeranyl cysteine moiety is linked to residue cysteine 191. Residues 192 to 194 constitute a propeptide, removed in mature form; it reads ALL.

It belongs to the small GTPase superfamily. Rho family. As to quaternary structure, interacts (GTP-bound form) with PAK4 (via CRIB domain). Interacts (GTP-bound form) with PAK5 (via CRIB domain). Mg(2+) serves as cofactor.

It localises to the cell membrane. Its subcellular location is the cytoplasm. It is found in the cytoskeleton. It carries out the reaction GTP + H2O = GDP + phosphate + H(+). With respect to regulation, regulated by guanine nucleotide exchange factors (GEFs) which promote the exchange of bound GDP for free GTP, GTPase activating proteins (GAPs) which increase the GTP hydrolysis activity, and GDP dissociation inhibitors which inhibit the dissociation of the nucleotide from the GTPase. In terms of biological role, small GTPase which cycles between active GTP-bound and inactive GDP-bound states. The polypeptide is Rho-related protein racC (Entamoeba histolytica (strain ATCC 30459 / HM-1:IMSS / ABRM)).